A 59-amino-acid chain; its full sequence is Cecropin-C type 2 (59 aa).

The N-terminal stretch at 1-23 (MNFAKVFVLVAMAVLLLVGQSEA) is a signal peptide.

It belongs to the cecropin family.

The protein resides in the secreted. In terms of biological role, cecropins have lytic and antibacterial activity against several Gram-positive and Gram-negative bacteria. The sequence is that of Cecropin-C type 2 (CECC2) from Aedes albopictus (Asian tiger mosquito).